We begin with the raw amino-acid sequence, 238 residues long: Cysteine-rich venom protein pseudechetoxin-like (238 aa).

An N-terminal signal peptide occupies residues 1–19 (MIAFLVLLSLAAVLQQSSG). A propeptide spanning residues 20 to 28 (TVDFASESS) is cleaved from the precursor. The SCP domain occupies 38–164 (VDKHNDLRRS…STKYLYVCQY (127 aa)). 8 disulfides stabilise this stretch: C75–C153, C92–C165, C148–C162, C184–C191, C187–C196, C200–C233, C209–C227, and C218–C231. The ShKT domain maps to 200–233 (CKHNDDLSNCKTLVKKHKCQTEWIKSKCPATCFC).

Belongs to the CRISP family. As to expression, expressed by the venom gland.

The protein resides in the secreted. In terms of biological role, blocks olfactory (CNGA2) and retinal (CNGA1) CNG channel currents. Does not affect neither depolarization- nor caffeine-induced contraction of smooth muscle. The chain is Cysteine-rich venom protein pseudechetoxin-like from Pseudonaja textilis (Eastern brown snake).